Reading from the N-terminus, the 487-residue chain is NADH-quinone oxidoreductase subunit N (487 aa).

The next 14 helical transmembrane spans lie at 8–28 (LIAM…MLSI), 35–55 (FINA…LYFV), 78–98 (GLVI…LVGY), 104–124 (EFYL…SANH), 125–145 (LASL…LIGY), 159–179 (YMLL…LLYA), 203–223 (ILAG…LVPF), 235–255 (PAPV…AVVM), 271–291 (LVLS…AISQ), 297–317 (LLGY…VAVQ), 328–348 (IGVY…VVSL), 376–396 (AVMT…GFIG), 409–428 (LWWL…YYYL), and 451–471 (ALTA…VLGI).

It belongs to the complex I subunit 2 family. In terms of assembly, NDH-1 is composed of 13 different subunits. Subunits NuoA, H, J, K, L, M, N constitute the membrane sector of the complex.

The protein localises to the cell inner membrane. The catalysed reaction is a quinone + NADH + 5 H(+)(in) = a quinol + NAD(+) + 4 H(+)(out). Functionally, NDH-1 shuttles electrons from NADH, via FMN and iron-sulfur (Fe-S) centers, to quinones in the respiratory chain. The immediate electron acceptor for the enzyme in this species is believed to be ubiquinone. Couples the redox reaction to proton translocation (for every two electrons transferred, four hydrogen ions are translocated across the cytoplasmic membrane), and thus conserves the redox energy in a proton gradient. The protein is NADH-quinone oxidoreductase subunit N of Yersinia pseudotuberculosis serotype O:1b (strain IP 31758).